The following is a 362-amino-acid chain: Putative RING-H2 finger protein ATL21B (362 aa).

Positions 1-23 (MIISKQLFLLFFLLFFIFPLRHA) are cleaved as a signal peptide. Residues 234-254 (VVAVLICLSIIGAVILFVTCI) traverse the membrane as a helical segment. The segment at 316–358 (CPICLSEYVSKETVRFIPECDHCFHAKCIDVWLKIHGSCPLCR) adopts an RING-type; atypical zinc-finger fold.

This sequence belongs to the RING-type zinc finger family. ATL subfamily.

It localises to the membrane. It carries out the reaction S-ubiquitinyl-[E2 ubiquitin-conjugating enzyme]-L-cysteine + [acceptor protein]-L-lysine = [E2 ubiquitin-conjugating enzyme]-L-cysteine + N(6)-ubiquitinyl-[acceptor protein]-L-lysine.. The protein operates within protein modification; protein ubiquitination. The protein is Putative RING-H2 finger protein ATL21B (ATL21B) of Arabidopsis thaliana (Mouse-ear cress).